Reading from the N-terminus, the 1787-residue chain is ATP-dependent RNA helicase DEAH11, chloroplastic (1787 aa).

The N-terminal 33 residues, 1–33 (MRNSFPPSDGGRSTTDRRQQSFPSSSTNRYNSR), are a transit peptide targeting the chloroplast. Residues 1–75 (MRNSFPPSDG…DRAPSSGFSP (75 aa)) are disordered. The segment covering 20–60 (QSFPSSSTNRYNSRSAQSSPPLNHCTTWNQQHSQYHNTNFP) has biased composition (polar residues). Residues 313–477 (LKKIHCEQIM…LFDCGILHVN (165 aa)) form the Helicase ATP-binding domain. An ATP-binding site is contributed by 326-333 (GETGSGKS). The short motif at 424–427 (DEAH) is the DEAH box element. In terms of domain architecture, Helicase C-terminal spans 507 to 673 (DVVKMAVEIH…VALLRMLALG (167 aa)). Positions 1557-1764 (IELECPICLS…EPCYAHLRTI (208 aa)) are TRIAD supradomain. Residues Cys-1561, Cys-1564, Cys-1577, His-1579, Cys-1582, Cys-1585, Cys-1604, Cys-1609, Cys-1649, Cys-1654, Cys-1672, Cys-1675, Cys-1680, Cys-1683, His-1688, Cys-1693, Cys-1719, and Cys-1722 each coordinate Zn(2+). The segment at 1561-1609 (CPICLSEVDDGYSLEGCSHLFCKACLLEQFEASMRNFDAFPILCSHIDC) adopts an RING-type 1 zinc-finger fold. The IBR-type zinc-finger motif lies at 1628–1693 (DELISASLSA…HLEYHPLITC (66 aa)). Residues 1719 to 1747 (CPICKSTIEKTDGCNHLQCRCGKHICWTC) form an RING-type 2; atypical zinc finger. Cys-1732 is a catalytic residue. Positions 1737 and 1739 each coordinate Zn(2+).

This sequence belongs to the DEAD box helicase family. DEAH subfamily.

Its subcellular location is the plastid. It localises to the chloroplast. The enzyme catalyses ATP + H2O = ADP + phosphate + H(+). The sequence is that of ATP-dependent RNA helicase DEAH11, chloroplastic from Arabidopsis thaliana (Mouse-ear cress).